A 98-amino-acid polypeptide reads, in one-letter code: Large ribosomal subunit protein uL23 (98 aa).

Belongs to the universal ribosomal protein uL23 family. Part of the 50S ribosomal subunit. Contacts protein L29, and trigger factor when it is bound to the ribosome.

In terms of biological role, one of the early assembly proteins it binds 23S rRNA. One of the proteins that surrounds the polypeptide exit tunnel on the outside of the ribosome. Forms the main docking site for trigger factor binding to the ribosome. The chain is Large ribosomal subunit protein uL23 from Methylobacterium nodulans (strain LMG 21967 / CNCM I-2342 / ORS 2060).